Reading from the N-terminus, the 160-residue chain is S-ribosylhomocysteine lyase (160 aa).

His57, His61, and Cys127 together coordinate Fe cation.

The protein belongs to the LuxS family. Homodimer. It depends on Fe cation as a cofactor.

It catalyses the reaction S-(5-deoxy-D-ribos-5-yl)-L-homocysteine = (S)-4,5-dihydroxypentane-2,3-dione + L-homocysteine. Its function is as follows. Involved in the synthesis of autoinducer 2 (AI-2) which is secreted by bacteria and is used to communicate both the cell density and the metabolic potential of the environment. The regulation of gene expression in response to changes in cell density is called quorum sensing. Catalyzes the transformation of S-ribosylhomocysteine (RHC) to homocysteine (HC) and 4,5-dihydroxy-2,3-pentadione (DPD). The protein is S-ribosylhomocysteine lyase of Streptococcus uberis (strain ATCC BAA-854 / 0140J).